The sequence spans 113 residues: Large ribosomal subunit protein bL17 (113 aa).

It belongs to the bacterial ribosomal protein bL17 family. In terms of assembly, part of the 50S ribosomal subunit. Contacts protein L32.

This Alkaliphilus metalliredigens (strain QYMF) protein is Large ribosomal subunit protein bL17.